The following is a 372-amino-acid chain: 4-hydroxy-3-methylbut-2-en-1-yl diphosphate synthase (flavodoxin) (372 aa).

4 residues coordinate [4Fe-4S] cluster: C270, C273, C305, and E312.

Belongs to the IspG family. Requires [4Fe-4S] cluster as cofactor.

The enzyme catalyses (2E)-4-hydroxy-3-methylbut-2-enyl diphosphate + oxidized [flavodoxin] + H2O + 2 H(+) = 2-C-methyl-D-erythritol 2,4-cyclic diphosphate + reduced [flavodoxin]. It functions in the pathway isoprenoid biosynthesis; isopentenyl diphosphate biosynthesis via DXP pathway; isopentenyl diphosphate from 1-deoxy-D-xylulose 5-phosphate: step 5/6. Functionally, converts 2C-methyl-D-erythritol 2,4-cyclodiphosphate (ME-2,4cPP) into 1-hydroxy-2-methyl-2-(E)-butenyl 4-diphosphate. The protein is 4-hydroxy-3-methylbut-2-en-1-yl diphosphate synthase (flavodoxin) of Marinobacter nauticus (strain ATCC 700491 / DSM 11845 / VT8) (Marinobacter aquaeolei).